A 154-amino-acid polypeptide reads, in one-letter code: MICETVEEFAAALPPFSALAGLDLGDKTIGVAVSDRMRGVATPLETIRRKKFGLDASALLAIVEQREIAGIVLGLPRNMDGSEGPRCQSTRAFARNLSRLTEVAITFWDERLSTVAAEKALLEADTTRKRRSEVIDHVAAAYILQGALDRLRNL.

Belongs to the YqgF nuclease family.

It is found in the cytoplasm. In terms of biological role, could be a nuclease involved in processing of the 5'-end of pre-16S rRNA. The polypeptide is Putative pre-16S rRNA nuclease (Ruegeria pomeroyi (strain ATCC 700808 / DSM 15171 / DSS-3) (Silicibacter pomeroyi)).